Here is a 1552-residue protein sequence, read N- to C-terminus: ABC multidrug transporter lscH (1552 aa).

2 consecutive transmembrane segments (helical) span residues 32 to 52 and 68 to 88; these read ETIL…IPII and WFKK…VGLW. Asn-91 carries an N-linked (GlcNAc...) asparagine glycan. Transmembrane regions (helical) follow at residues 100 to 120, 158 to 178, 280 to 300, 311 to 331, 413 to 433, 457 to 477, 500 to 520, and 528 to 548; these read STPS…LSTI, HSAI…MLLL, LFQI…IELA, NGYG…VSVG, AACV…VFLA, ALAS…FSVI, ILSI…FAGI, and LTIA…SPLA. The ABC transmembrane type-1 1 domain maps to 280-559; sequence LFQIGFTYAQ…IVQALPQISG (280 aa). Positions 573 to 655 are disordered; sequence AEERHDPRST…PDANGDSRDA (83 aa). Over residues 581 to 602 the composition is skewed to polar residues; the sequence is STTTGTSPESNNGSQQTLSDKQ. N-linked (GlcNAc...) asparagine glycosylation occurs at Asn-592. The ABC transporter 1 domain maps to 639–884; it reads GHLADTTPDA…AELGWADRDL (246 aa). 676–683 is a binding site for ATP; it reads GPVGCGKS. Residues Asn-719 and Asn-834 are each glycosylated (N-linked (GlcNAc...) asparagine). The segment covering 887 to 912 has biased composition (basic and acidic residues); it reads QQEKPGKDELNHEHGEYSESAPEKLR. Residues 887–917 form a disordered region; that stretch reads QQEKPGKDELNHEHGEYSESAPEKLRRSQTN. The next 2 membrane-spanning stretches (helical) occupy residues 957–977 and 1005–1025; these read GWLT…CDSF and AVLG…LFII. An ABC transmembrane type-1 2 domain is found at 963-1241; that stretch reads IFVIAICVYA…ATITSWVTLE (279 aa). The N-linked (GlcNAc...) asparagine glycan is linked to Asn-1028. A run of 4 helical transmembrane segments spans residues 1076–1096, 1100–1120, 1184–1204, and 1210–1230; these read AALG…LVCV, YMAA…HFYL, WITF…IVLT, and AIGP…SATM. One can recognise an ABC transporter 2 domain in the interval 1295–1538; it reads IELDNVTASY…PTSIFKELYL (244 aa). 2 N-linked (GlcNAc...) asparagine glycosylation sites follow: Asn-1299 and Asn-1313. 1328 to 1335 contacts ATP; sequence GRTGSGKS.

The protein belongs to the ABC transporter superfamily. ABCC family. Conjugate transporter (TC 3.A.1.208) subfamily.

The protein localises to the cell membrane. In terms of biological role, ABC multidrug transporter; part of the gene cluster that mediates the biosynthesis of the lipopeptide antibiotics leucinostatins that show extensive biological activities, including antimalarial, antiviral, antibacterial, antifungal, and antitumor activities, as well as phytotoxic. May be involved in the efflux of leucinostatins. This chain is ABC multidrug transporter lscH, found in Purpureocillium lilacinum (Paecilomyces lilacinus).